A 346-amino-acid chain; its full sequence is Methylthioribose-1-phosphate isomerase (346 aa).

Substrate contacts are provided by residues 46-48 (RGA), Arg89, and Gln196. Asp237 serves as the catalytic Proton donor. 247 to 248 (NK) provides a ligand contact to substrate.

The protein belongs to the eIF-2B alpha/beta/delta subunits family. MtnA subfamily.

It carries out the reaction 5-(methylsulfanyl)-alpha-D-ribose 1-phosphate = 5-(methylsulfanyl)-D-ribulose 1-phosphate. It participates in amino-acid biosynthesis; L-methionine biosynthesis via salvage pathway; L-methionine from S-methyl-5-thio-alpha-D-ribose 1-phosphate: step 1/6. Its function is as follows. Catalyzes the interconversion of methylthioribose-1-phosphate (MTR-1-P) into methylthioribulose-1-phosphate (MTRu-1-P). This is Methylthioribose-1-phosphate isomerase from Citrifermentans bemidjiense (strain ATCC BAA-1014 / DSM 16622 / JCM 12645 / Bem) (Geobacter bemidjiensis).